We begin with the raw amino-acid sequence, 394 residues long: 3-hydroxybenzoate 6-hydroxylase 1 (394 aa).

Belongs to the 3-hydroxybenzoate 6-hydroxylase family. In terms of assembly, homotrimer. The cofactor is FAD.

It catalyses the reaction 3-hydroxybenzoate + NADH + O2 + H(+) = 2,5-dihydroxybenzoate + NAD(+) + H2O. Inhibited by manganese, copper, mercury, and iron ions. Functionally, catalyzes the NAD- or NADP-dependent conversion of 3-hydroxybenzoate to gentisate. The affinity of the enzyme toward NAD is twice as high as for NADP. The enzyme shows higher specific activities against the intermediates in the degradation of 2,5-xylenol and 3,5-xylenol, 3-hydroxy-4-methylbenzoate and 3-hydroxy-5-methylbenzoate, respectively, than for 3-hydroxybenzoate. It also shows activity against 3-substituted benzoates. In Aquipseudomonas alcaligenes (Pseudomonas alcaligenes), this protein is 3-hydroxybenzoate 6-hydroxylase 1 (xlnD).